The primary structure comprises 461 residues: D-arabinono-1,4-lactone oxidase (461 aa).

The FAD-binding PCMH-type domain maps to 24–194; it reads FSAISLGLRC…VDITISVVPA (171 aa). Histidine 61 is subject to Pros-8alpha-FAD histidine.

Belongs to the oxygen-dependent FAD-linked oxidoreductase family. The cofactor is FAD.

The protein localises to the mitochondrion membrane. It carries out the reaction D-arabinono-1,4-lactone + O2 = dehydro-D-arabinono-1,4-lactone + H2O2 + H(+). It participates in cofactor biosynthesis; D-erythroascorbate biosynthesis; dehydro-D-arabinono-1,4-lactone from D-arabinose: step 2/2. This chain is D-arabinono-1,4-lactone oxidase (alo1), found in Schizosaccharomyces pombe (strain 972 / ATCC 24843) (Fission yeast).